The chain runs to 195 residues: N-(5'-phosphoribosyl)anthranilate isomerase (195 aa).

The protein belongs to the TrpF family.

The catalysed reaction is N-(5-phospho-beta-D-ribosyl)anthranilate = 1-(2-carboxyphenylamino)-1-deoxy-D-ribulose 5-phosphate. It functions in the pathway amino-acid biosynthesis; L-tryptophan biosynthesis; L-tryptophan from chorismate: step 3/5. This Methanoregula boonei (strain DSM 21154 / JCM 14090 / 6A8) protein is N-(5'-phosphoribosyl)anthranilate isomerase.